The sequence spans 419 residues: Mitogen-activated protein kinase pmk-2 (419 aa).

The 302-residue stretch at 49–350 folds into the Protein kinase domain; sequence YNSLKPLGEG…VSSALRHDYL (302 aa). Residues 55–63 and Lys78 contribute to the ATP site; that span reads LGEGAYGVV. Catalysis depends on Asp210, which acts as the Proton acceptor. Thr222 carries the phosphothreonine modification. Positions 222–224 match the TXY motif; it reads TGY. The residue at position 224 (Tyr224) is a Phosphotyrosine.

This sequence belongs to the protein kinase superfamily. CMGC Ser/Thr protein kinase family. MAP kinase subfamily. The cofactor is Mg(2+). Post-translationally, dually phosphorylated on Thr-222 and Tyr-224, which activates the enzyme.

The protein resides in the cytoplasm. It catalyses the reaction L-seryl-[protein] + ATP = O-phospho-L-seryl-[protein] + ADP + H(+). The enzyme catalyses L-threonyl-[protein] + ATP = O-phospho-L-threonyl-[protein] + ADP + H(+). With respect to regulation, activated by phosphorylation on threonine and tyrosine. Inhibited by pyridinyl-imidazole related compounds. In terms of biological role, responds to activation by environmental stress and pro-inflammatory cytokines by phosphorylating downstream targets. The polypeptide is Mitogen-activated protein kinase pmk-2 (pmk-2) (Caenorhabditis elegans).